Here is a 399-residue protein sequence, read N- to C-terminus: Nicotinate phosphoribosyltransferase (399 aa).

At H217 the chain carries Phosphohistidine; by autocatalysis.

It belongs to the NAPRTase family. Post-translationally, transiently phosphorylated on a His residue during the reaction cycle. Phosphorylation strongly increases the affinity for substrates and increases the rate of nicotinate D-ribonucleotide production. Dephosphorylation regenerates the low-affinity form of the enzyme, leading to product release.

It catalyses the reaction nicotinate + 5-phospho-alpha-D-ribose 1-diphosphate + ATP + H2O = nicotinate beta-D-ribonucleotide + ADP + phosphate + diphosphate. The protein operates within cofactor biosynthesis; NAD(+) biosynthesis; nicotinate D-ribonucleotide from nicotinate: step 1/1. Its function is as follows. Catalyzes the synthesis of beta-nicotinate D-ribonucleotide from nicotinate and 5-phospho-D-ribose 1-phosphate at the expense of ATP. This chain is Nicotinate phosphoribosyltransferase, found in Burkholderia mallei (strain ATCC 23344).